A 335-amino-acid chain; its full sequence is NAC domain-containing protein 40 (335 aa).

An NAC domain is found at 14 to 156 (LFPGFRFSPT…ALVVCRLRKN (143 aa)). A DNA-binding region spans residues 112–162 (VGTKRTLVFHIGRAPRGERTEWIMHEYCIHGAPQDALVVCRLRKNADFRAS). Residues 245–254 (PTNPTHQETI) show a composition bias toward polar residues. The disordered stretch occupies residues 245 to 267 (PTNPTHQETISSESSSKRSKCGI). Residues 313-333 (VLATTVFLAILFSFFWTVLIA) traverse the membrane as a helical segment.

In terms of processing, proteolytically cleaved, probably by metalloprotease activity. This cleavage mediates a translocation from the plasma membrane to the nucleus. As to expression, expressed in seeds, leaves, roots and inflorescence. Expressed in roots, rosette leaves, cauline leaves, shoot apex, stems and flowers.

The protein localises to the cell membrane. It localises to the nucleus. Its function is as follows. Transcriptional activator activated by proteolytic cleavage through regulated intramembrane proteolysis (RIP), probably via metalloprotease activity. Regulates gibberellic acid-mediated salt-responsive repression of seed germination and flowering via FT, thus delaying seed germination under high salinity conditions. In Arabidopsis thaliana (Mouse-ear cress), this protein is NAC domain-containing protein 40.